A 324-amino-acid chain; its full sequence is T-cell acute lymphocytic leukemia protein 1 homolog (324 aa).

The tract at residues 1-49 (MMEKLKSEQFPLSPSAEGCASPPRGDGDARGKQEGTTAETGEHRLPEEL) is disordered. A bHLH domain is found at 185 to 237 (VRRIFTNSRERWRQQNVNGAFAELRKLIPTHPPDKKLSKNEILRLAMKYINFL). The interval 276-324 (SPNSSCGSLLDGDASPESFTEDQDSSVESRPSARGLHHSSLPLDGNAQR) is disordered.

As to expression, expressed in hemopoietic and endothelial lineages. Isoform beta emerges first, expressing in the entire anterior and posterior lateral mesoderm (ALM and PLM respectively), and in the ventral wall of the dorsal aorta, where definitive hemopoiesis begins. Isoform alpha expresses later as two pairs of stripes in the PLM and ALM, and becomes restricted to the intermediate cell mass (ICM) by the 18-somite stage. The ICM is the key site of primitive hemopoiesis, giving rise to the erythroid lineage. Also expressed in all stages of endocardial cell migration and in the developing midbrain, hindbrain and spinal cord. In adults, expressed in the main hemopoietic organs, namely the kidney (where isoform alpha is the predominant isoform) and the spleen. Also expressed in the liver, gill and gonads.

It localises to the nucleus. Its function is as follows. Transcription factor that plays a pivotal role in hemopoietic and endothelial development, acting synergistically with lmo2 and downstream of clo. Specifies mesodermal precursors to a hemangioblast cell fate. Hemangioblasts are bipotential precursors of blood and endothelium, and in the absence of hemopoietic induction cues such as gata1, tal1/scl-lmo2-induced hemangioblasts differentiate into endothelial cells. Isoform alpha and isoform beta are redundant for the initiation of primitive hemopoiesis but have distinct roles in the regulation of primitive erythroid differentiation and definitive hemopoietic stem cell specification, most likely due to differences in expression levels. Specification of definitive hemopoietic stem cells requires isoform beta. DNA binding is required for erythroid maturation, but not for its other hemopoietic functions. Endothelial roles include development of the dorsal aorta, the site of definitive hemopoiesis in the embryo. Required for angiogenesis but not angioblast specification. Has an additional role in endocardium formation during heart development. May play a role in central nervous system development. In Danio rerio (Zebrafish), this protein is T-cell acute lymphocytic leukemia protein 1 homolog.